The primary structure comprises 128 residues: Fluoride-specific ion channel FluC (128 aa).

4 helical membrane passes run 6–26 (LVALGGAIGSAARFTLSGLVL), 36–56 (LPTFTVNIIGCLVIGMLAGLA), 68–88 (VLLFTGLVGGFTTFSAFGLET), and 99–119 (IAAAYIVSSIVVGLVLMWLGF). Na(+)-binding residues include G76 and T79.

Belongs to the fluoride channel Fluc/FEX (TC 1.A.43) family.

It is found in the cell inner membrane. It catalyses the reaction fluoride(in) = fluoride(out). With respect to regulation, na(+) is not transported, but it plays an essential structural role and its presence is essential for fluoride channel function. Its function is as follows. Fluoride-specific ion channel. Important for reducing fluoride concentration in the cell, thus reducing its toxicity. This is Fluoride-specific ion channel FluC from Methylobacillus flagellatus (strain ATCC 51484 / DSM 6875 / VKM B-1610 / KT).